The following is a 380-amino-acid chain: Protein Wnt-5a (380 aa).

A signal peptide spans 1-37 (MKKPIGILSPGVALGTAGGAMSSKFFLMALATFFSFA). The propeptide occupies 38–61 (QVVIEANSWWSLGMNNPVQMSEVY). Cys104 and Cys115 are disulfide-bonded. Residues Asn114 and Asn120 are each glycosylated (N-linked (GlcNAc...) asparagine). 10 disulfides stabilise this stretch: Cys154/Cys162, Cys164/Cys182, Cys238/Cys252, Cys240/Cys247, Cys309/Cys340, Cys325/Cys335, Cys339/Cys379, Cys355/Cys370, Cys357/Cys367, and Cys362/Cys363. The O-palmitoleoyl serine; by PORCN moiety is linked to residue Ser244. N-linked (GlcNAc...) asparagine glycosylation is found at Asn312 and Asn326.

The protein belongs to the Wnt family. In terms of assembly, forms a soluble 1:1 complex with AFM; this prevents oligomerization and is required for prolonged biological activity. The complex with AFM may represent the physiological form in body fluids. Homooligomer; disulfide-linked, leading to inactivation. Interacts with PORCN. Interacts with WLS. Interacts with glypican GCP3. Interacts with PKD1 (via extracellular domain). Interacts with TMEM67. Glycosylation is necessary for secretion but not for activity. Post-translationally, palmitoleoylation is required for efficient binding to frizzled receptors. Depalmitoleoylation leads to Wnt signaling pathway inhibition. In terms of processing, proteolytic processing by TIKI1 and TIKI2 promotes oxidation and formation of large disulfide-bond oligomers, leading to inactivation of WNT5A. As to expression, expressed in a gradient at the caudal end of the embryo during gastrulation and later in the distal-most aspect of several structures that extend from the body such as the limbs and genital tubercle.

It is found in the secreted. It localises to the extracellular space. The protein resides in the extracellular matrix. Ligand for members of the frizzled family of seven transmembrane receptors. Can activate or inhibit canonical Wnt signaling, depending on receptor context. In the presence of FZD4, activates beta-catenin signaling. In the presence of ROR2, inhibits the canonical Wnt pathway by promoting beta-catenin degradation through a GSK3-independent pathway which involves down-regulation of beta-catenin-induced reporter gene expression. Suppression of the canonical pathway allows chondrogenesis to occur and inhibits tumor formation. Stimulates cell migration. Decreases proliferation, migration, invasiveness and clonogenicity of carcinoma cells and may act as a tumor suppressor. Mediates motility of melanoma cells. Required during embryogenesis for extension of the primary anterior-posterior axis and for outgrowth of limbs and the genital tubercle. Inhibits type II collagen expression in chondrocytes. The chain is Protein Wnt-5a (Wnt5a) from Mus musculus (Mouse).